Consider the following 723-residue polypeptide: MSSRPLLTLALSLHDRLDELSNRGQIHLVGYDLDVAAVAAVARHECLPIVNDGEVIARLSESTEILQRSYKGSTTIYGVHTGFGGSADTRPDDSSGLSKGLMQLLQTGVLVVENLDIPGLDTPQDVIPESMPSSWTRATTVVRINQCIRGHSAIRHQTVKSLLKLVAAQITPIVPLRGSISASGDLMPLSYIAGTLEGSPDIYVTKGGGKSAKIISAHDALGEIGMEPLRLGPREGLGLVNGTATSAATASLAVLDAIQLTLLSTGLTCLVSEGMAARVEWLHPFIAETRPHPGQREVAEIMRAFLKGSRLVSGLEGEASTHQHTLNVRPDEGLPQDRYPLRTSPQWLGPQFEDILLAHSQISVELNSTSDNPLTNLKTGAIHHGGNFQATSITSAVEKIRTSLQMVGKLLFSQCTEMINHQMNAGLPPNLAADDPSASFCCKGLDINIAAYQSELSYLSNSISNHVQSAEMHNQAVNSLAFLSTRYTIKAIELLGMMVAGVLYAACQAMDLRVMHATFLETVTATLQKAIADLLPNGFEAEDVERSLASAIRGLRNAWWNNAGSDASERCSLAAVAFVQVLCDPSKHHTDTPKVKVCLDLTAKEMRELQDDVRSHLSQAYHKHHSAFLEKPTTEEYIGEGSKALYLWARQDLGIPMNRGLVDHPSPGSIGKRTIGSYVSMIYQGIQDGRLFQRFATVGREVGLGNGGTNGIRKRAYAEYEIS.

The active-site Proton donor/acceptor is the Tyr-77. The 5-imidazolinone (Ala-Gly) cross-link spans Ala-182–Gly-184. The residue at position 183 (Ser-183) is a 2,3-didehydroalanine (Ser). (E)-cinnamate-binding residues include Asn-241, Gln-336, Arg-342, Asn-372, Lys-443, Glu-471, and Asn-474.

Belongs to the PAL/histidase family. Post-translationally, contains an active site 4-methylidene-imidazol-5-one (MIO), which is formed autocatalytically by cyclization and dehydration of residues Ala-Ser-Gly.

The protein resides in the cytoplasm. It carries out the reaction L-phenylalanine = (E)-cinnamate + NH4(+). Its pathway is secondary metabolite biosynthesis. The protein operates within phenylpropanoid metabolism; trans-cinnamate biosynthesis; trans-cinnamate from L-phenylalanine: step 1/1. Phenylalanine ammonia-lyase; part of the gene cluster that mediates the biosynthesis of squalestatin S1 (SQS1, also known as zaragozic acid A), a heavily oxidized fungal polyketide that offers potent cholesterol lowering activity by targeting squalene synthase (SS). SQS1 is composed of a 2,8-dioxobicyclic[3.2.1]octane-3,4,5-tricarboxyclic acid core that is connected to two lipophilic polyketide arms. These initial steps feature the priming of an unusual benzoic acid starter unit onto the highly reducing polyketide synthase clz14, followed by oxaloacetate extension and product release to generate a tricarboxylic acid containing product. The phenylalanine ammonia lyase (PAL) clz10 and the acyl-CoA ligase clz12 are involved in transforming phenylalanine into benzoyl-CoA. The citrate synthase-like protein clz17 is involved in connecting the C-alpha-carbons of the hexaketide chain and oxaloacetate to afford the tricarboxylic acid unit. The potential hydrolytic enzymes, clz11 and clz13, are in close proximity to pks2 and may participate in product release. On the other side, the tetraketide arm is synthesized by a the squalestatin tetraketide synthase clz2 and enzymatically esterified to the core in the last biosynthetic step, by the acetyltransferase clz6. The biosynthesis of the tetraketide must involve 3 rounds of chain extension. After the first and second rounds methyl-transfer occurs, and in all rounds of extension the ketoreductase and dehydratase are active. The enoyl reductase and C-MeT of clz2 are not active in the final round of extension. The acetyltransferase clz6 appears to have a broad substrate selectivity for its acyl CoA substrate, allowing the in vitro synthesis of novel squalestatins. The biosynthesis of SQS1 requires several oxidative steps likely performed by oxidoreductases clz3, clz15 and clz16. Finally, in support of the identification of the cluster as being responsible for SQS1 production, the cluster contains a gene encoding a putative squalene synthase (SS) clz20, suggesting a likely mechanism for self-resistance. The sequence is that of Phenylalanine ammonia-lyase from Cochliobolus lunatus (Filamentous fungus).